Here is a 203-residue protein sequence, read N- to C-terminus: Auxin-induced protein 22E (203 aa).

The EAR-like (transcriptional repression) signature appears at 15–19; it reads LRLGL. Residues 15-77 form a disordered region; it reads LRLGLPGSDE…DHNEDSVQPA (63 aa). Residues 43–52 show a composition bias toward basic and acidic residues; that stretch reads SSPELEESRC. Residues 58–67 show a composition bias toward low complexity; the sequence is SDSSDSTTTS. The PB1 domain maps to 107-199; sequence GMYLKVSMAG…RIIKGSEAKG (93 aa).

Belongs to the Aux/IAA family. In terms of assembly, homodimers and heterodimers.

The protein localises to the nucleus. In terms of biological role, aux/IAA proteins are short-lived transcriptional factors that function as repressors of early auxin response genes at low auxin concentrations. Repression is thought to result from the interaction with auxin response factors (ARFs), proteins that bind to the auxin-responsive promoter element (AuxRE). Formation of heterodimers with ARF proteins may alter their ability to modulate early auxin response genes expression. The chain is Auxin-induced protein 22E (AUX22E) from Vigna radiata var. radiata (Mung bean).